A 289-amino-acid chain; its full sequence is Fumagillin beta-trans-bergamotene synthase af520 (289 aa).

The next 6 membrane-spanning stretches (helical) occupy residues 35–55 (AVALVLAAPCSFHLIIKGFLW), 95–115 (TLLYRVLFFLMWVAAVYTNTI), 142–162 (LIGAIGLGCYCWGTTIIFDGG), 165–185 (LHGLKAVAVLMIVGIFATTGH), 222–242 (AWTIGLIALWKPPAIVTLAYV), and 262–282 (YVSYCWYGFWLLGSNILPIFP).

Belongs to the paxB family.

It is found in the membrane. The catalysed reaction is (2E,6E)-farnesyl diphosphate = (+)-exo-beta-bergamotene + diphosphate. Its pathway is secondary metabolite biosynthesis; terpenoid biosynthesis. Its function is as follows. Beta-trans-bergamotene synthase; part of the gene cluster that mediates the biosynthesis of fumagillin, a meroterpenoid that has numerous biological activities including irreversible inhibition of human type 2 methionine aminopeptidase (METAP2). Within the pathway, the membrane-bound fumagillin beta-trans-bergamotene synthase af520 converts farnesyl pyrophosphate (FPP) to beta-trans-bergamotene. The pathway begins with the conversion of FPP to beta-trans-bergamotene by af520. The multifunctional cytochrome P450 monooxygenase af510 then converts beta-trans-bergamotene into 5-keto-demethoxyfumagillol via several oxydation steps. 5-keto-demethoxyfumagillol is then subjected to successive C-6 hydroxylation and O-methylation by the dioxygenase af480 and O-methyltransferase af390-400, respectively, to yield 5-keto-fumagillol, which is then stereoselectively reduced by the keto-reductase af490 to 5R-hydroxy-seco-sesquiterpene. The next step is the polyketide transferase af380-catalyzed transfer of a dodecapentaenoyl group synthesized by the polyketide synthase af370 onto 5R-hydroxy-seco-sesquiterpene which leads to the production of prefumagillin. Finally, oxidative cleavage by the monooxygenase af470 converts prefumagillin to fumagillin. The polypeptide is Fumagillin beta-trans-bergamotene synthase af520 (Aspergillus fumigatus (strain ATCC MYA-4609 / CBS 101355 / FGSC A1100 / Af293) (Neosartorya fumigata)).